The sequence spans 335 residues: ATP-dependent 6-phosphofructokinase (335 aa).

G11 is a binding site for ATP. 21–25 (RAVVR) is an ADP binding site. ATP-binding positions include 72 to 73 (RY) and 102 to 105 (GDGS). Residue D103 coordinates Mg(2+). 125 to 127 (TID) is a substrate binding site. D127 (proton acceptor) is an active-site residue. Position 154 (R154) interacts with ADP. Substrate is bound by residues R162 and 169 to 171 (MGR). ADP contacts are provided by residues 185–187 (GAD) and 213–215 (KKH). Substrate is bound by residues E222, R244, and 250-253 (HIQR).

This sequence belongs to the phosphofructokinase type A (PFKA) family. ATP-dependent PFK group I subfamily. Prokaryotic clade 'B1' sub-subfamily. In terms of assembly, homotetramer. Mg(2+) is required as a cofactor.

It is found in the cytoplasm. It catalyses the reaction beta-D-fructose 6-phosphate + ATP = beta-D-fructose 1,6-bisphosphate + ADP + H(+). It functions in the pathway carbohydrate degradation; glycolysis; D-glyceraldehyde 3-phosphate and glycerone phosphate from D-glucose: step 3/4. With respect to regulation, allosterically activated by ADP and other diphosphonucleosides, and allosterically inhibited by phosphoenolpyruvate. Its function is as follows. Catalyzes the phosphorylation of D-fructose 6-phosphate to fructose 1,6-bisphosphate by ATP, the first committing step of glycolysis. This chain is ATP-dependent 6-phosphofructokinase, found in Streptococcus pneumoniae serotype 19F (strain G54).